A 407-amino-acid polypeptide reads, in one-letter code: tRNA(Ile)-lysidine synthase (407 aa).

An ATP-binding site is contributed by 36–41; sequence SGGRDS.

The protein belongs to the tRNA(Ile)-lysidine synthase family.

It localises to the cytoplasm. It catalyses the reaction cytidine(34) in tRNA(Ile2) + L-lysine + ATP = lysidine(34) in tRNA(Ile2) + AMP + diphosphate + H(+). Its function is as follows. Ligates lysine onto the cytidine present at position 34 of the AUA codon-specific tRNA(Ile) that contains the anticodon CAU, in an ATP-dependent manner. Cytidine is converted to lysidine, thus changing the amino acid specificity of the tRNA from methionine to isoleucine. The chain is tRNA(Ile)-lysidine synthase from Tropheryma whipplei (strain TW08/27) (Whipple's bacillus).